Reading from the N-terminus, the 101-residue chain is Small ribosomal subunit protein bS18c (101 aa).

Belongs to the bacterial ribosomal protein bS18 family. In terms of assembly, part of the 30S ribosomal subunit.

The protein resides in the plastid. The protein localises to the chloroplast. The protein is Small ribosomal subunit protein bS18c (rps18) of Arabidopsis thaliana (Mouse-ear cress).